The chain runs to 89 residues: UPF0250 protein CV_3095 (89 aa).

This sequence belongs to the UPF0250 family.

This is UPF0250 protein CV_3095 from Chromobacterium violaceum (strain ATCC 12472 / DSM 30191 / JCM 1249 / CCUG 213 / NBRC 12614 / NCIMB 9131 / NCTC 9757 / MK).